We begin with the raw amino-acid sequence, 555 residues long: CCR4-NOT transcription complex subunit 6-like (555 aa).

Positions 1–152 (MRLIGMPKEK…NLYQDPDGTR (152 aa)) are required for interaction with CNOT1, CNOT3 and CNOT7. 4 LRR repeats span residues 57-78 (HLTALHLNDNYLSRIPPDIAKL), 80-101 (NLVYLDLSSNKLRSLPAELGNM), 103-125 (SLRELLLNNNLLRVLPYELGRLF), and 126-148 (QLQTLGLKGNPLSQDILNLYQDP). Residues 158-555 (MLDNLAVHPE…VNGVHLPNRR (398 aa)) form a nuclease domain region. Position 240 (glutamate 240) interacts with Mg(2+). Residues glutamate 240, glutamate 276, histidine 360, and proline 365 each contribute to the substrate site. Aspartate 410 is a Mg(2+) binding site. Aspartate 410 functions as the Proton donor/acceptor in the catalytic mechanism. 3 residues coordinate substrate: asparagine 412, asparagine 479, and phenylalanine 484.

The protein belongs to the CCR4/nocturin family. Component of the CCR4-NOT complex; distinct complexes seem to exist that differ in the participation of probably mutually exclusive catalytic subunits; the complex contains two deadenylase subunits, CNOT6 or CNOT6L, and CNOT7 or CNOT8. Interacts with CNOT1, CNOT3, CNOT7, CNOT8 and CNOT9. Interacts with TOB1. Interacts with NANOS2. Interacts with ZFP36. Interacts with ZFP36L2. Interacts with RBM46. Mg(2+) serves as cofactor. As to expression, highly expressed in placenta, skeletal muscle, pancreas, testis and leukocytes. Weakly expressed in heart, spleen and thymus.

Its subcellular location is the cytoplasm. It localises to the nucleus. It carries out the reaction Exonucleolytic cleavage of poly(A) to 5'-AMP.. With respect to regulation, inhibited by free AMP, and with lesser efficiency also by CMP, GMP, UMP, ATP and neomycin. In terms of biological role, has 3'-5' poly(A) exoribonuclease activity for synthetic poly(A) RNA substrate. Catalytic component of the CCR4-NOT complex which is one of the major cellular mRNA deadenylases and is linked to various cellular processes including bulk mRNA degradation, miRNA-mediated repression, translational repression during translational initiation and general transcription regulation. Additional complex functions may be a consequence of its influence on mRNA expression. May be involved in the deadenylation-dependent degradation of mRNAs through the 3'-UTR AU-rich element-mediated mechanism. Involved in deadenylation-dependent degradation of CDKN1B mRNA. Its mRNA deadenylase activity can be inhibited by TOB1. Mediates cell proliferation and cell survival and prevents cellular senescence. The polypeptide is CCR4-NOT transcription complex subunit 6-like (CNOT6L) (Homo sapiens (Human)).